We begin with the raw amino-acid sequence, 122 residues long: Large ribosomal subunit protein bL12 (122 aa).

It belongs to the bacterial ribosomal protein bL12 family. As to quaternary structure, homodimer. Part of the ribosomal stalk of the 50S ribosomal subunit. Forms a multimeric L10(L12)X complex, where L10 forms an elongated spine to which 2 to 4 L12 dimers bind in a sequential fashion. Binds GTP-bound translation factors.

In terms of biological role, forms part of the ribosomal stalk which helps the ribosome interact with GTP-bound translation factors. Is thus essential for accurate translation. This Shewanella woodyi (strain ATCC 51908 / MS32) protein is Large ribosomal subunit protein bL12.